Here is a 368-residue protein sequence, read N- to C-terminus: Putative alcohol dehydrogenase D (368 aa).

Cys40, His61, Cys91, Cys94, Cys97, Cys105, and Cys167 together coordinate Zn(2+).

This sequence belongs to the zinc-containing alcohol dehydrogenase family. Zn(2+) serves as cofactor.

It carries out the reaction a primary alcohol + NAD(+) = an aldehyde + NADH + H(+). The catalysed reaction is a secondary alcohol + NAD(+) = a ketone + NADH + H(+). Functionally, required for maintaining the appropriate mycolic acid composition and permeability of the envelope on its exposure to acidic pH. The sequence is that of Putative alcohol dehydrogenase D (adhD) from Mycobacterium tuberculosis (strain CDC 1551 / Oshkosh).